A 154-amino-acid polypeptide reads, in one-letter code: Transcriptional repressor NrdR (154 aa).

A zinc finger lies at 3-34; sequence CPFCGANDTKVIDSRLVAEGEQVRRRRECLAC. An ATP-cone domain is found at 49–139; sequence PRLIKQDGSR…VYRRFQDLNE (91 aa).

It belongs to the NrdR family. Zn(2+) serves as cofactor.

Functionally, negatively regulates transcription of bacterial ribonucleotide reductase nrd genes and operons by binding to NrdR-boxes. The sequence is that of Transcriptional repressor NrdR from Pseudomonas savastanoi pv. phaseolicola (strain 1448A / Race 6) (Pseudomonas syringae pv. phaseolicola (strain 1448A / Race 6)).